Reading from the N-terminus, the 130-residue chain is Cytidine deaminase (130 aa).

The CMP/dCMP-type deaminase domain maps to Val3–Ser130. Asn43–Glu45 contacts substrate. Cys54 is a binding site for Zn(2+). Glu56 acts as the Proton donor in catalysis. The Zn(2+) site is built by Cys88 and Cys91.

Belongs to the cytidine and deoxycytidylate deaminase family. In terms of assembly, homodimer. It depends on Zn(2+) as a cofactor.

The catalysed reaction is cytidine + H2O + H(+) = uridine + NH4(+). It carries out the reaction 2'-deoxycytidine + H2O + H(+) = 2'-deoxyuridine + NH4(+). In terms of biological role, this enzyme scavenges exogenous and endogenous cytidine and 2'-deoxycytidine for UMP synthesis. In Mycoplasma genitalium (strain ATCC 33530 / DSM 19775 / NCTC 10195 / G37) (Mycoplasmoides genitalium), this protein is Cytidine deaminase (cdd).